The following is a 389-amino-acid chain: Chalcone synthase 3 (389 aa).

Cys164 is a catalytic residue.

It belongs to the thiolase-like superfamily. Chalcone/stilbene synthases family.

The catalysed reaction is (E)-4-coumaroyl-CoA + 3 malonyl-CoA + 3 H(+) = 2',4,4',6'-tetrahydroxychalcone + 3 CO2 + 4 CoA. The protein operates within secondary metabolite biosynthesis; flavonoid biosynthesis. Functionally, the primary product of this enzyme is 4,2',4',6'-tetrahydroxychalcone (also termed naringenin-chalcone or chalcone) which can under specific conditions spontaneously isomerize into naringenin. The protein is Chalcone synthase 3 (CHS3) of Pisum sativum (Garden pea).